The following is a 539-amino-acid chain: Glutamate/serine transporter AimA (539 aa).

The next 13 membrane-spanning stretches (helical) occupy residues 11-31 (FSLMMVGLGSMIGSGWLFGAW), 36-56 (IAGPAAIISWVIGMVVILFIA), 82-102 (SFIGFIAGWANWIAIVSVIPV), 137-157 (AFASVLLLIYFLLNYWTVNLF), 164-184 (ITIFKIIIPGLTIGALLFVGF), 199-219 (GWASVLTAVATSGIVFAFNGF), 238-258 (IAVVGSLFVATVIYVLLQIAF), 283-303 (LAIALNINWLVIVLYADAFVS), 350-370 (LIVSFIFLFLFRGWGVLAEII), 401-421 (LKGLNVIAPLGFIFASLVLYW), 424-444 (WPLTGQVLFIILIGLPIYFYY), 457-477 (FKAGVWMVFYLLAMMVISYLG), and 486-506 (VIHYGWDMVLIAMVSLVFYVW).

The protein belongs to the amino acid-polyamine-organocation (APC) superfamily. AGT (TC 2.A.3.11) family.

Its subcellular location is the cell membrane. In terms of biological role, major glutamate and serine transporter. Cannot transport threonine. AimA is the major glutamate transporter under standard growth conditions when glutamate is not limiting in the medium. The polypeptide is Glutamate/serine transporter AimA (Bacillus subtilis (strain 168)).